The chain runs to 418 residues: Glutamyl-tRNA reductase (418 aa).

Substrate-binding positions include 49-52 (TCNR), S109, 114-116 (EPQ), and Q120. C50 (nucleophile) is an active-site residue. 189 to 194 (GAGETI) is a binding site for NADP(+).

This sequence belongs to the glutamyl-tRNA reductase family. As to quaternary structure, homodimer.

It catalyses the reaction (S)-4-amino-5-oxopentanoate + tRNA(Glu) + NADP(+) = L-glutamyl-tRNA(Glu) + NADPH + H(+). It functions in the pathway porphyrin-containing compound metabolism; protoporphyrin-IX biosynthesis; 5-aminolevulinate from L-glutamyl-tRNA(Glu): step 1/2. Its function is as follows. Catalyzes the NADPH-dependent reduction of glutamyl-tRNA(Glu) to glutamate 1-semialdehyde (GSA). The chain is Glutamyl-tRNA reductase from Citrobacter koseri (strain ATCC BAA-895 / CDC 4225-83 / SGSC4696).